We begin with the raw amino-acid sequence, 288 residues long: 4-diphosphocytidyl-2-C-methyl-D-erythritol kinase (288 aa).

Lys-12 is a catalytic residue. 95 to 105 provides a ligand contact to ATP; that stretch reads PAGGGVGGGSS. Residue Asp-137 is part of the active site.

It belongs to the GHMP kinase family. IspE subfamily.

It carries out the reaction 4-CDP-2-C-methyl-D-erythritol + ATP = 4-CDP-2-C-methyl-D-erythritol 2-phosphate + ADP + H(+). The protein operates within isoprenoid biosynthesis; isopentenyl diphosphate biosynthesis via DXP pathway; isopentenyl diphosphate from 1-deoxy-D-xylulose 5-phosphate: step 3/6. Catalyzes the phosphorylation of the position 2 hydroxy group of 4-diphosphocytidyl-2C-methyl-D-erythritol. In Halorhodospira halophila (strain DSM 244 / SL1) (Ectothiorhodospira halophila (strain DSM 244 / SL1)), this protein is 4-diphosphocytidyl-2-C-methyl-D-erythritol kinase.